A 273-amino-acid chain; its full sequence is Large ribosomal subunit protein uL2 (273 aa).

2 disordered regions span residues 28–55 (TPEK…RHRG) and 222–273 (GMAM…SKRK). The segment covering 255–273 (YKTRKKRRVSDRFIVSKRK) has biased composition (basic residues).

The protein belongs to the universal ribosomal protein uL2 family. As to quaternary structure, part of the 50S ribosomal subunit. Forms a bridge to the 30S subunit in the 70S ribosome.

Its function is as follows. One of the primary rRNA binding proteins. Required for association of the 30S and 50S subunits to form the 70S ribosome, for tRNA binding and peptide bond formation. It has been suggested to have peptidyltransferase activity; this is somewhat controversial. Makes several contacts with the 16S rRNA in the 70S ribosome. This Treponema pallidum (strain Nichols) protein is Large ribosomal subunit protein uL2.